A 270-amino-acid chain; its full sequence is Type III pantothenate kinase (270 aa).

6–13 serves as a coordination point for ATP; it reads DVRNTHTV. 109-112 is a substrate binding site; that stretch reads GADR. Aspartate 111 functions as the Proton acceptor in the catalytic mechanism. Aspartate 131 is a binding site for K(+). Serine 134 is an ATP binding site. Threonine 186 serves as a coordination point for substrate.

This sequence belongs to the type III pantothenate kinase family. Homodimer. NH4(+) serves as cofactor. K(+) is required as a cofactor.

Its subcellular location is the cytoplasm. The enzyme catalyses (R)-pantothenate + ATP = (R)-4'-phosphopantothenate + ADP + H(+). It participates in cofactor biosynthesis; coenzyme A biosynthesis; CoA from (R)-pantothenate: step 1/5. Catalyzes the phosphorylation of pantothenate (Pan), the first step in CoA biosynthesis. The chain is Type III pantothenate kinase from Mycolicibacterium gilvum (strain PYR-GCK) (Mycobacterium gilvum (strain PYR-GCK)).